Here is a 1242-residue protein sequence, read N- to C-terminus: Protein jagged-1a (1242 aa).

The first 28 residues, 1–28, serve as a signal peptide directing secretion; it reads MILRPSATFAALSAHVLLRCLWMRVCEA. At 29–1070 the chain is on the extracellular side; that stretch reads SGHFEMQVLS…KQPQNPNVDY (1042 aa). Residue N141 is glycosylated (N-linked (GlcNAc...) asparagine). The DSL domain maps to 186–230; it reads VTCDEHYFGFGCNKFCRPRDDFFGHYTCDHNGNKTCLEGWAGPEC. Intrachain disulfides connect C188-C197 and C201-C213. Residue N218 is glycosylated (N-linked (GlcNAc...) asparagine). Cystine bridges form between C221/C230, C235/C246, C239/C252, C254/C263, C266/C277, C272/C283, C285/C294, C301/C313, C307/C323, C325/C334, C341/C352, C346/C361, C363/C372, C379/C390, C384/C399, C401/C410, C417/C428, C422/C437, C439/C448, C455/C465, C459/C474, C476/C485, C492/C503, C497/C512, C514/C523, C530/C541, C535/C550, C552/C561, C600/C618, C620/C629, C636/C647, C641/C656, C658/C667, C674/C685, C679/C694, C696/C705, C712/C723, C717/C732, and C734/C743. Residues 231–264 form the EGF-like 1 domain; the sequence is NTAICKQGCSIEHGSCKVPGNCRCLYGWQGEYCD. The EGF-like 2; atypical domain occupies 265–295; that stretch reads QCIPHPGCVHGTCIEPWQCLCDTNWGGQLCD. 2 consecutive EGF-like domains span residues 297–335 and 337–373; these read DLNTCGTLQPCLNGGTCSNTGPDKYHCACPDGYSGQNCE and ADNACLSEPCLNGGLCVESSLGFECQCAAGWTGPSCN. The EGF-like 5; calcium-binding domain maps to 375–411; that stretch reads NEDDCSPNPCNHSGVCVDLVDGFKCICPVQWTGKTCL. N-linked (GlcNAc...) asparagine glycosylation occurs at N385. Positions 413–449 constitute an EGF-like 6; calcium-binding domain; the sequence is DANECEESPCVNAHSCRNLIGGYFCECLPGWTGQNCD. The EGF-like 7; calcium-binding domain occupies 451–486; that stretch reads NVNDCHGQCLNGGLCKDLVNGYRCVCAAGFAGDRCE. The 37-residue stretch at 488 to 524 folds into the EGF-like 8; calcium-binding domain; the sequence is DVDECASRPCLNGGRCQDTLNGFQCLCPPGFSGATCQ. EGF-like domains lie at 526 to 562 and 575 to 630; these read DLDYCESGPCQNGAQCFSLASDYYCKCPEDYEGKNCS and VIDS…TYCH. N560 carries N-linked (GlcNAc...) asparagine glycosylation. An EGF-like 11; calcium-binding domain is found at 632 to 668; that stretch reads NINDCESSPCLSGGTCIDKINAYQCICADGWEGPNCE. Positions 670 to 706 constitute an EGF-like 12; calcium-binding domain; the sequence is NIDDCRTNPCRDRGVCRDLVNDFYCECENGWKGKTCH. 2 consecutive EGF-like domains span residues 708-744 and 747-783; these read RESQCDEDTCNNGGTCSDEGDSFKCLCSPGWEGATCN and KNSSCLPNPCENGATCVVTGDGFTCVCKEGWEGPTCS. Residue N748 is glycosylated (N-linked (GlcNAc...) asparagine). 9 disulfide bridges follow: C751/C762, C756/C771, C773/C782, C789/C800, C794/C809, C811/C820, C827/C838, C832/C847, and C849/C858. The 37-residue stretch at 785-821 folds into the EGF-like 15; calcium-binding domain; sequence NSNDCNPQPCYNSGTCVDGDNWYRCECASGFAGPDCR. The EGF-like 16; calcium-binding domain occupies 823-859; sequence NINECQSSPCAFGSTCVDEINGYRCLCPPGRTGPRCQ. In terms of domain architecture, EGF-like 17 spans 917–959; that stretch reads TGQLCVPVRDEQCFVKPCSSQGECWSAHRPAVRTHCQPDSHCA. N-linked (GlcNAc...) asparagine glycosylation is found at N960, N991, and N1046. A helical membrane pass occupies residues 1071-1095; sequence MVPLLVSVVTAIWVLALASVFLWCI. The Cytoplasmic portion of the chain corresponds to 1096 to 1242; that stretch reads RHHRKQSSSA…HSLQKMEYIV (147 aa). Residues 1191–1242 are disordered; that stretch reads RDDRLSSNGTDIKKHPQWTNKRDNRDLESQHRVPDSQHRDSQHSLQKMEYIV. Over residues 1210–1232 the composition is skewed to basic and acidic residues; the sequence is NKRDNRDLESQHRVPDSQHRDSQ.

It localises to the membrane. The protein resides in the cell membrane. In terms of biological role, ligand for multiple Notch receptors and involved in the mediation of Notch signaling. Seems to be involved in cell-fate decisions. In Danio rerio (Zebrafish), this protein is Protein jagged-1a (jag1a).